A 59-amino-acid chain; its full sequence is Large ribosomal subunit protein uL30 (59 aa).

This sequence belongs to the universal ribosomal protein uL30 family. In terms of assembly, part of the 50S ribosomal subunit.

In Ectopseudomonas mendocina (strain ymp) (Pseudomonas mendocina), this protein is Large ribosomal subunit protein uL30.